The sequence spans 212 residues: F-box protein GID2 (212 aa).

The interval 1 to 74 is disordered; the sequence is MKFRSDSSGG…AGEGEQPRVP (74 aa). Residues 35–59 are compositionally biased toward low complexity; the sequence is DPSSSSSQGEASSSSQPPPQQQQEE. The 47-residue stretch at 70 to 116 folds into the F-box domain; sequence QPRVPDLGEDLVFEVLRRAEARTLAAAACVSRGWRQLAEDERLWEAA.

Part of some SCF(GID2) complex, which consist of a SKP1 protein, CUL1, GID2 and some RING box protein. Interacts directly with SKP2 and SKP15. Interacts directly with DELLA protein SLR1. May have a higher affinity for phosphorylated SLR1 proteins. Widely expressed. Preferentially expressed in unopened flowers, shoot apices and elongation stem. Expressed at lower level in the leaf blades, leaf sheaths, roots and rachis.

Its subcellular location is the nucleus. The protein operates within protein modification; protein ubiquitination. Functionally, essential component of some SCF-type E3 ligase complex that positively regulates the gibberellin signaling pathway. Upon gibberellin treatment, the complex mediates the ubiquitination and subsequent degradation of DELLA protein SLR1, a repressor of the gibberellin pathway, leading to activate the pathway. This Oryza sativa subsp. japonica (Rice) protein is F-box protein GID2 (GID2).